The chain runs to 398 residues: Argininosuccinate synthase (398 aa).

Residues 9–17 (AYSGGVDTS) and alanine 37 contribute to the ATP site. Tyrosine 88 serves as a coordination point for L-citrulline. Glycine 118 contributes to the ATP binding site. L-aspartate contacts are provided by threonine 120, asparagine 124, and aspartate 125. Asparagine 124 is an L-citrulline binding site. Arginine 128, serine 176, serine 185, glutamate 261, and tyrosine 273 together coordinate L-citrulline.

This sequence belongs to the argininosuccinate synthase family. Type 1 subfamily. As to quaternary structure, homotetramer.

It is found in the cytoplasm. It catalyses the reaction L-citrulline + L-aspartate + ATP = 2-(N(omega)-L-arginino)succinate + AMP + diphosphate + H(+). Its pathway is amino-acid biosynthesis; L-arginine biosynthesis; L-arginine from L-ornithine and carbamoyl phosphate: step 2/3. This Gloeobacter violaceus (strain ATCC 29082 / PCC 7421) protein is Argininosuccinate synthase.